The primary structure comprises 483 residues: uncharacterized protein (483 aa).

This is an uncharacterized protein from Acanthamoeba polyphaga mimivirus (APMV).